The sequence spans 273 residues: UPF0380 protein YfjQ (273 aa).

This sequence belongs to the UPF0380 family.

In Escherichia coli (strain K12), this protein is UPF0380 protein YfjQ (yfjQ).